We begin with the raw amino-acid sequence, 617 residues long: Protein fem-1 homolog A (617 aa).

7 ANK repeats span residues 2 to 32, 40 to 70, 82 to 111, 115 to 144, 148 to 177, 181 to 210, and 213 to 242; these read DISA…EERA, EGGT…NVAL, EGAP…PVNN, TNST…DLEV, HGHT…DVNR, KGNT…RMER, and YGMT…ASRE. 2 TPR repeats span residues 245–279 and 339–372; these read IHAL…RWAG and SYYI…QQSN. 2 ANK repeats span residues 482–524 and 528–557; these read GGHT…DVDS and DNNT…HFDA.

It belongs to the fem-1 family. As to quaternary structure, component of a CRL2 E3 ubiquitin-protein ligase complex, also named ECS (Elongin BC-CUL2/5-SOCS-box protein) complex.

It localises to the mitochondrion. The protein resides in the cytoplasm. It participates in protein modification; protein ubiquitination. Its function is as follows. Substrate-recognition component of a Cul2-RING (CRL2) E3 ubiquitin-protein ligase complex of the DesCEND (destruction via C-end degrons) pathway, which recognizes a C-degron located at the extreme C terminus of target proteins, leading to their ubiquitination and degradation. The C-degron recognized by the DesCEND pathway is usually a motif of less than ten residues and can be present in full-length proteins, truncated proteins or proteolytically cleaved forms. The CRL2(FEM1A) complex specifically recognizes proteins with an arginine at the C-terminus: recognizes and binds proteins ending with -Lys/Arg-Xaa-Arg and -Lys/Arg-Xaa-Xaa-Arg C-degrons, leading to their ubiquitination and degradation. This is Protein fem-1 homolog A from Danio rerio (Zebrafish).